We begin with the raw amino-acid sequence, 359 residues long: Phosphoserine aminotransferase (359 aa).

Arg-41 is a binding site for L-glutamate. Residues 75–76, Trp-99, Thr-147, Asp-166, and Gln-189 contribute to the pyridoxal 5'-phosphate site; that span reads AS. An N6-(pyridoxal phosphate)lysine modification is found at Lys-190. Residue 231–232 participates in pyridoxal 5'-phosphate binding; the sequence is NT.

The protein belongs to the class-V pyridoxal-phosphate-dependent aminotransferase family. SerC subfamily. In terms of assembly, homodimer. Pyridoxal 5'-phosphate serves as cofactor.

It is found in the cytoplasm. The enzyme catalyses O-phospho-L-serine + 2-oxoglutarate = 3-phosphooxypyruvate + L-glutamate. It carries out the reaction 4-(phosphooxy)-L-threonine + 2-oxoglutarate = (R)-3-hydroxy-2-oxo-4-phosphooxybutanoate + L-glutamate. Its pathway is amino-acid biosynthesis; L-serine biosynthesis; L-serine from 3-phospho-D-glycerate: step 2/3. It participates in cofactor biosynthesis; pyridoxine 5'-phosphate biosynthesis; pyridoxine 5'-phosphate from D-erythrose 4-phosphate: step 3/5. Catalyzes the reversible conversion of 3-phosphohydroxypyruvate to phosphoserine and of 3-hydroxy-2-oxo-4-phosphonooxybutanoate to phosphohydroxythreonine. The sequence is that of Phosphoserine aminotransferase from Azobacteroides pseudotrichonymphae genomovar. CFP2.